A 450-amino-acid polypeptide reads, in one-letter code: Interferon-induced protein 75 (450 aa).

Positions 1 to 108 constitute an HSR domain; that stretch reads MFTLTKALEK…IFRSFRNVGY (108 aa). 2 disordered regions span residues 131–156 and 170–225; these read CSLQ…APRV and LDEQ…VKDD. A compositionally biased stretch (low complexity) spans 143–154; it reads QLSLPSHLSSAP. Phosphoserine occurs at positions 175 and 177. The span at 197 to 212 shows a compositional bias: basic and acidic residues; that stretch reads SRDHQRKDKEDSREMP. Residue serine 226 is modified to Phosphoserine. Disordered regions lie at residues 238–283 and 318–360; these read VLCT…HGVQ and AQTS…KNDA. The segment covering 245–267 has biased composition (basic residues); sequence KKARRKKRLNWSNSKRGRQKKKP. Residues 251–266 carry the Nuclear localization signal motif; the sequence is KRLNWSNSKRGRQKKK. The span at 343 to 353 shows a compositional bias: polar residues; sequence TSTAGKTTQVP. In terms of domain architecture, SAND spans 358-439; that stretch reads NDAVDFLSPT…RQLEQKGLLF (82 aa).

The protein resides in the nucleus. The chain is Interferon-induced protein 75 (Ifi75) from Mus caroli (Ryukyu mouse).